The chain runs to 458 residues: Argininosuccinate lyase (458 aa).

It belongs to the lyase 1 family. Argininosuccinate lyase subfamily.

Its subcellular location is the cytoplasm. The enzyme catalyses 2-(N(omega)-L-arginino)succinate = fumarate + L-arginine. Its pathway is amino-acid biosynthesis; L-arginine biosynthesis; L-arginine from L-ornithine and carbamoyl phosphate: step 3/3. This Geobacter sulfurreducens (strain ATCC 51573 / DSM 12127 / PCA) protein is Argininosuccinate lyase.